The sequence spans 486 residues: Glutamyl-tRNA(Gln) amidotransferase subunit A (486 aa).

Residues Lys78 and Ser153 each act as charge relay system in the active site. The active-site Acyl-ester intermediate is the Ser177.

The protein belongs to the amidase family. GatA subfamily. Heterotrimer of A, B and C subunits.

It catalyses the reaction L-glutamyl-tRNA(Gln) + L-glutamine + ATP + H2O = L-glutaminyl-tRNA(Gln) + L-glutamate + ADP + phosphate + H(+). Allows the formation of correctly charged Gln-tRNA(Gln) through the transamidation of misacylated Glu-tRNA(Gln) in organisms which lack glutaminyl-tRNA synthetase. The reaction takes place in the presence of glutamine and ATP through an activated gamma-phospho-Glu-tRNA(Gln). This Syntrophobacter fumaroxidans (strain DSM 10017 / MPOB) protein is Glutamyl-tRNA(Gln) amidotransferase subunit A.